The following is a 215-amino-acid chain: Cytidylate kinase (215 aa).

10–18 (GPAASGKGT) serves as a coordination point for ATP.

It belongs to the cytidylate kinase family. Type 1 subfamily.

Its subcellular location is the cytoplasm. The catalysed reaction is CMP + ATP = CDP + ADP. It carries out the reaction dCMP + ATP = dCDP + ADP. The polypeptide is Cytidylate kinase (Bartonella henselae (strain ATCC 49882 / DSM 28221 / CCUG 30454 / Houston 1) (Rochalimaea henselae)).